The chain runs to 309 residues: Porphobilinogen deaminase (309 aa).

Cys241 is modified (S-(dipyrrolylmethanemethyl)cysteine).

It belongs to the HMBS family. As to quaternary structure, monomer. It depends on dipyrromethane as a cofactor.

The enzyme catalyses 4 porphobilinogen + H2O = hydroxymethylbilane + 4 NH4(+). The protein operates within porphyrin-containing compound metabolism; protoporphyrin-IX biosynthesis; coproporphyrinogen-III from 5-aminolevulinate: step 2/4. Tetrapolymerization of the monopyrrole PBG into the hydroxymethylbilane pre-uroporphyrinogen in several discrete steps. The chain is Porphobilinogen deaminase from Desulforudis audaxviator (strain MP104C).